Reading from the N-terminus, the 992-residue chain is UPF0182 protein MT3285 (992 aa).

7 helical membrane passes run 17 to 39, 59 to 81, 113 to 135, 169 to 191, 212 to 229, 255 to 277, and 284 to 306; these read RILI…LIDA, LATR…FGGL, LVGI…SYWA, LMLS…AHYI, LVSL…AYWL, VLPA…FSAI, and IPAI…WPLI. Positions 906–938 are disordered; it reads PTEAAVPPSPAANPPPPASGPQPPPVTAAPPVP. The span at 912-938 shows a compositional bias: pro residues; it reads PPSPAANPPPPASGPQPPPVTAAPPVP.

It belongs to the UPF0182 family.

It is found in the cell membrane. The sequence is that of UPF0182 protein MT3285 from Mycobacterium tuberculosis (strain CDC 1551 / Oshkosh).